Consider the following 376-residue polypeptide: Flagellin B (376 aa).

A coiled-coil region spans residues 103 to 129 (SNSSSERRAIQEEVSALNDELNRIAET).

The protein belongs to the bacterial flagellin family. As to quaternary structure, heteromer of multiple flagellin subunits including FlaA, FlaB, FlaC, FlaD and FlaE.

The protein localises to the secreted. It is found in the bacterial flagellum. Its function is as follows. Flagellin is the subunit protein which polymerizes to form the filaments of bacterial flagella. FlaB is not essential for flagellar synthesis and motility. The sequence is that of Flagellin B (flaB) from Vibrio cholerae serotype O1 (strain ATCC 39541 / Classical Ogawa 395 / O395).